Reading from the N-terminus, the 603-residue chain is MIRQCLSRRAACPCYRIAAGGTELTGCLYPQSSRISRRGRDWSSTSRRAIDTQTSGASNGADYVPLRKQLKEQAREGRAATRKGEVSPPEHEDWELTVGIEIHAQLDTDTKLFSRASAAIDDVPNSNVALFDIALPGSQPLFQPATLIPALRAAIALNCDVQRVSRFDRKHYFYQDQPAGYQITQYYEPYAKNGSIWLGPHDGIAKEDGVGVKIGIKQIQLEQDTAKSQELPSSTYLLDFNRVSRPLIEIITLPQIHSPATAAACVRKIQTILQSVGAVTTGMEMGGLRADVNVSVRKRSEGVGDHQYHGITGLGQRTEIKNLSSFKAVENAIIAERDRQIAVLRAGGAIEGETRGWTLGSTETRKLRGKEGEVDYRYMPDPDLGPVIIGIDVFFELKAKLPVLPDALLQSLVQDPKYGLSTDDAKALIELDDGDRLDYYKDAVDILITLQKDLSDDFSGGGKVVGNWVLHELGGLLTKSNLHWDSERVPAQSLAEIINLLSRNKITGSTAKSLLAMVFDGDKRSISQIVEDENLLLQSLSREEYIALAEEVMRQNPKMVMEICEKRQLGKIGWLVGQIKQIGDRNRVEAQKAEEILRELILK.

2 disordered regions span residues 38 to 61 (RGRD…SNGA) and 72 to 91 (EQAR…PPEH). The span at 42–58 (WSSTSRRAIDTQTSGAS) shows a compositional bias: polar residues.

This sequence belongs to the GatB/GatE family. GatB subfamily. Subunit of the heterotrimeric GatCAB amidotransferase (AdT) complex, composed of A, B and C subunits.

The protein resides in the mitochondrion. It catalyses the reaction L-glutamyl-tRNA(Gln) + L-glutamine + ATP + H2O = L-glutaminyl-tRNA(Gln) + L-glutamate + ADP + phosphate + H(+). Its function is as follows. Allows the formation of correctly charged Gln-tRNA(Gln) through the transamidation of misacylated Glu-tRNA(Gln) in the mitochondria. The reaction takes place in the presence of glutamine and ATP through an activated gamma-phospho-Glu-tRNA(Gln). The chain is Glutamyl-tRNA(Gln) amidotransferase subunit B, mitochondrial from Paracoccidioides brasiliensis (strain Pb18).